Reading from the N-terminus, the 695-residue chain is DNA ligase (695 aa).

30-34 serves as a coordination point for NAD(+); sequence DADFD. The segment at 52-71 is disordered; it reads TGASPTEEVAPAPPTSSPFR. NAD(+) is bound by residues 81–82 and Glu106; that span reads SL. Lys108 serves as the catalytic N6-AMP-lysine intermediate. The NAD(+) site is built by Arg129, Glu169, Lys285, and Lys309. Residues Cys403, Cys406, Cys422, and Cys428 each coordinate Zn(2+). Residues 599 to 688 enclose the BRCT domain; it reads VDSALLEGLT…APSSGDDAST (90 aa). The segment at 676-695 is disordered; it reads ENGAPSSGDDASTSADSVDD. A compositionally biased stretch (low complexity) spans 679-695; that stretch reads APSSGDDASTSADSVDD.

Belongs to the NAD-dependent DNA ligase family. LigA subfamily. Mg(2+) serves as cofactor. Requires Mn(2+) as cofactor.

The enzyme catalyses NAD(+) + (deoxyribonucleotide)n-3'-hydroxyl + 5'-phospho-(deoxyribonucleotide)m = (deoxyribonucleotide)n+m + AMP + beta-nicotinamide D-nucleotide.. Its function is as follows. DNA ligase that catalyzes the formation of phosphodiester linkages between 5'-phosphoryl and 3'-hydroxyl groups in double-stranded DNA using NAD as a coenzyme and as the energy source for the reaction. It is essential for DNA replication and repair of damaged DNA. This chain is DNA ligase, found in Corynebacterium jeikeium (strain K411).